The chain runs to 2944 residues: Collagen alpha-1(VII) chain (2944 aa).

Residues 1-16 (MTLRLLVAALCAGILA) form the signal peptide. Residues 17–1253 (EAPRVRAQHR…PEPCPVYCPK (1237 aa)) form a nonhelical region (NC1) region. The VWFA 1 domain maps to 38-211 (DIVFLLDGSS…SILRTLLPLV (174 aa)). Fibronectin type-III domains lie at 234-329 (APRD…TALE), 330-416 (GPEL…TDAS), 417-507 (VEQT…PELP), 510-597 (PVTD…EPET), 600-687 (AVPG…DPLG), 688-775 (PVRT…APEP), 778-866 (RVSR…PPEA), 869-957 (ALGT…SPRV), and 958-1051 (PSIE…CPRG). The N-linked (GlcNAc...) asparagine glycan is linked to N337. A disordered region spans residues 632–651 (STGSGPESSQTLPPDSTATD). N-linked (GlcNAc...) asparagine glycosylation occurs at N786. Residues 1054–1229 (DVVFLPHATQ…PSLDQAVSGL (176 aa)) form the VWFA 2 domain. A glycan (N-linked (GlcNAc...) asparagine) is linked at N1109. 2 consecutive short sequence motifs (cell attachment site) follow at residues 1170 to 1172 (RGD) and 1334 to 1336 (RGD). Disordered stretches follow at residues 1239–1941 (TTQP…SVPN), 1963–2782 (WDES…EKGE), and 2837–2872 (SHAE…PWDS). Residues 1254–1477 (GQKGEPGEMG…GPRGPPGAIG (224 aa)) are interrupted collagenous region. The segment at 1254-2784 (GQKGEPGEMG…GPRGEKGEAA (1531 aa)) is triple-helical region. Positions 1336–1346 (DPGERGPRGPK) are enriched in basic and acidic residues. The segment covering 1355–1365 (VIGGEGPGLPG) has biased composition (gly residues). The span at 1399–1408 (KGDKGDRGER) shows a compositional bias: basic and acidic residues. Pro residues predominate over residues 1429–1440 (PGSPGPQGPVGP). Low complexity predominate over residues 1574–1583 (RGPPGLVLPG). 3 stretches are compositionally biased toward basic and acidic residues: residues 1630–1642 (RGRD…KGDE), 1669–1683 (VGEK…EDGR), and 1715–1733 (AREK…RGPK). The segment covering 1786–1802 (KPGAAGPSGPNGAAGKA) has biased composition (low complexity). Over residues 1852–1877 (EDGRKGEKGDSGASGREGRDGPKGER) the composition is skewed to basic and acidic residues. Residues 1886–1897 (QGPPGLPGPVGP) show a composition bias toward pro residues. Residues 1898 to 1911 (PGQGFPGVPGGTGP) are compositionally biased toward gly residues. Basic and acidic residues predominate over residues 1974–1984 (PERRRGPKGDS). The Cell attachment site motif lies at 2008–2010 (RGD). A 4-hydroxyproline mark is found at P2036 and P2039. Over residues 2046–2055 (GRAGGVGEAG) the composition is skewed to gly residues. The segment covering 2056 to 2074 (RPGERGERGEKGERGEQGR) has biased composition (basic and acidic residues). Residues 2078–2092 (PGLPGTPGPPGPPGP) are compositionally biased toward pro residues. 4-hydroxyproline is present on residues P2084, P2087, and P2090. Residues 2127 to 2143 (PKGDRGVPGIKGDRGEP) are compositionally biased toward basic and acidic residues. 4-hydroxyproline occurs at positions 2167, 2176, 2185, and 2188. Low complexity-rich tracts occupy residues 2191 to 2206 (PGLA…SGLK) and 2235 to 2250 (SGLV…PGQV). A compositionally biased stretch (basic and acidic residues) spans 2328–2346 (AKGDRGLPGPRGEKGEAGR). A compositionally biased stretch (low complexity) spans 2387 to 2406 (VKGDLGLPGLPGAPGVVGFP). Positions 2438–2448 (PLGPPGPPGSV) are enriched in pro residues. Composition is skewed to basic and acidic residues over residues 2471–2486 (RGER…DGRP) and 2534–2570 (AKGD…EPGD). Residues 2553 to 2555 (RGD) carry the Cell attachment site motif. Over residues 2573–2601 (SAGLPGLRGLLGPQGQPGAAGIPGDPGSP) the composition is skewed to low complexity. 5-hydroxylysine; alternate is present on residues K2625 and K2631. Residues K2625 and K2631 are each glycosylated (O-linked (Gal...) hydroxylysine; alternate). 4-hydroxyproline occurs at positions 2664, 2667, and 2673. A compositionally biased stretch (gly residues) spans 2704–2713 (GTPGIGGFPG). The segment covering 2749–2762 (GERVVGAPGVPGAP) has biased composition (low complexity). The segment at 2785 to 2944 (LTEDDIRGFV…QSQGTGTAQD (160 aa)) is nonhelical region (NC2). Positions 2837-2847 (SHAEEEERVPP) are enriched in basic and acidic residues. The segment covering 2848–2872 (EDDEYSEYSEYSVEEYQDPEAPWDS) has biased composition (acidic residues). Positions 2872–2944 (SDDPCSLPLD…QSQGTGTAQD (73 aa)) constitute a BPTI/Kunitz inhibitor domain. 3 cysteine pairs are disulfide-bonded: C2876–C2929, C2885–C2912, and C2904–C2925.

As to quaternary structure, homotrimer. Interacts with MIA3/TANGO1; facilitating its loading into transport carriers and subsequent secretion. Prolines at the third position of the tripeptide repeating unit (G-X-Y) are hydroxylated in some or all of the chains.

The protein localises to the secreted. The protein resides in the extracellular space. Its subcellular location is the extracellular matrix. It is found in the basement membrane. Functionally, stratified squamous epithelial basement membrane protein that forms anchoring fibrils which may contribute to epithelial basement membrane organization and adherence by interacting with extracellular matrix (ECM) proteins such as type IV collagen. The protein is Collagen alpha-1(VII) chain (COL7A1) of Homo sapiens (Human).